Consider the following 308-residue polypeptide: D-alanine--D-alanine ligase (308 aa).

An ATP-grasp domain is found at 103–302 (KFVFRAAGLP…YGELVSWMVE (200 aa)). 130-184 (MDPPYVIKPVSEGSSVGVFIVRAGDNRPPAELTSAEWNLGDEVMAERYIAGRELT) is an ATP binding site. Residues Asp-252, Glu-269, and Asn-271 each coordinate Mg(2+).

Belongs to the D-alanine--D-alanine ligase family. It depends on Mg(2+) as a cofactor. Requires Mn(2+) as cofactor.

The protein resides in the cytoplasm. The enzyme catalyses 2 D-alanine + ATP = D-alanyl-D-alanine + ADP + phosphate + H(+). The protein operates within cell wall biogenesis; peptidoglycan biosynthesis. Cell wall formation. The sequence is that of D-alanine--D-alanine ligase from Parvibaculum lavamentivorans (strain DS-1 / DSM 13023 / NCIMB 13966).